The primary structure comprises 226 residues: Probable endonuclease LCL3 (226 aa).

The helical transmembrane segment at 15 to 32 (VFYTSILTGGILSSFYVY) threads the bilayer. The region spanning 53–212 (RTLFGRVTSV…RKKKIGMFQQ (160 aa)) is the TNase-like domain. Arg103 is an active-site residue. Asp108 provides a ligand contact to Ca(2+). Catalysis depends on residues Glu111 and Arg151.

Belongs to the LCL3 family.

Its subcellular location is the mitochondrion. It localises to the membrane. The polypeptide is Probable endonuclease LCL3 (LCL3) (Yarrowia lipolytica (strain CLIB 122 / E 150) (Yeast)).